A 631-amino-acid polypeptide reads, in one-letter code: Anthrax toxin receptor-like (631 aa).

The N-terminal stretch at 1–27 is a signal peptide; sequence MGSHESLGPYFLVFLLLLLLPPPLFRA. The Extracellular segment spans residues 28–353; the sequence is GSLRYHGPDW…TSTTCGIFRN (326 aa). Residues 76 to 246 enclose the VWFA domain; sequence DLYFILDKSG…KALRSTIDAL (171 aa). The a divalent metal cation site is built by Ser84, Ser86, and Thr150. The helical transmembrane segment at 354–374 threads the bilayer; it reads WLYFVPLLLLVPLLLCCVWRL. Over 375–631 the chain is Cytoplasmic; the sequence is CRKQTVKEPP…LSLPPSEPNF (257 aa). The tract at residues 382–413 is disordered; it reads EPPPVQKPEKEPEQEKPPSPPPPPPPPPPPLP. The span at 388–397 shows a compositional bias: basic and acidic residues; it reads KPEKEPEQEK. Over residues 398–413 the composition is skewed to pro residues; the sequence is PPSPPPPPPPPPPPLP.

This sequence belongs to the ATR family.

It localises to the membrane. In Homo sapiens (Human), this protein is Anthrax toxin receptor-like (ANTXRL).